We begin with the raw amino-acid sequence, 634 residues long: Kelch-like protein 22 (634 aa).

Ala2 is subject to N-acetylalanine. One can recognise a BTB domain in the interval 50 to 117; the sequence is FDVVLVVEGR…IYTSELELSL (68 aa). Kelch repeat units follow at residues 299–349, 350–399, 400–446, 448–493, 494–544, and 545–593; these read CVVG…VLNN, FVYL…VVGR, YIYA…TLEG, MYVT…TLLD, KLYV…VLDT, and RIYV…VLTL. Phosphothreonine is present on Thr463. Phosphotyrosine is present on Tyr466. A disordered region spans residues 600–634; sequence EPPRGTPDRSQADPDFASEVMSVSDWEEFDNSSED. Thr605 carries the phosphothreonine modification. The segment covering 624-634 has biased composition (acidic residues); the sequence is DWEEFDNSSED.

As to quaternary structure, component of the BCR(KLHL22) E3 ubiquitin ligase complex, at least composed of CUL3, KLHL22 and RBX1. Interacts with PLK1. Interacts with DEPDC5 (via DEP domain); the interaction depends on amino acid availability. Interacts with YWHAE; required for the nuclear localization of KLHL22 upon amino acid starvation.

The protein localises to the cytoplasm. It localises to the cytosol. It is found in the cytoskeleton. The protein resides in the microtubule organizing center. Its subcellular location is the centrosome. The protein localises to the spindle. It localises to the nucleus. It is found in the lysosome. Its pathway is protein modification; protein ubiquitination. Its function is as follows. Substrate-specific adapter of a BCR (BTB-CUL3-RBX1) E3 ubiquitin ligase complex required for chromosome alignment and localization of PLK1 at kinetochores. The BCR(KLHL22) ubiquitin ligase complex mediates monoubiquitination of PLK1, leading to PLK1 dissociation from phosphoreceptor proteins and subsequent removal from kinetochores, allowing silencing of the spindle assembly checkpoint (SAC) and chromosome segregation. Monoubiquitination of PLK1 does not lead to PLK1 degradation. The BCR(KLHL22) ubiquitin ligase complex is also responsible for the amino acid-stimulated 'Lys-48' polyubiquitination and proteasomal degradation of DEPDC5. Through the degradation of DEPDC5, releases the GATOR1 complex-mediated inhibition of the TORC1 pathway. It is therefore an amino acid-dependent activator within the amino acid-sensing branch of the TORC1 pathway, indirectly regulating different cellular processes including cell growth and autophagy. This chain is Kelch-like protein 22 (KLHL22), found in Ailuropoda melanoleuca (Giant panda).